A 127-amino-acid polypeptide reads, in one-letter code: Small ribosomal subunit protein uS8m (127 aa).

Belongs to the universal ribosomal protein uS8 family.

It localises to the mitochondrion. In Acanthamoeba castellanii (Amoeba), this protein is Small ribosomal subunit protein uS8m (RPS8).